A 133-amino-acid polypeptide reads, in one-letter code: Ubiquitin-like FUBI-ribosomal protein eS30 fusion protein (133 aa).

Residues 1 to 74 (MQLFVRAQEL…LEVAGRMLGG (74 aa)) form the Ubiquitin-like domain. Lys125 bears the N6-succinyllysine mark.

In the N-terminal section; belongs to the ubiquitin family. This sequence in the C-terminal section; belongs to the eukaryotic ribosomal protein eS30 family. In terms of assembly, component of the 40S subunit of the ribosome. In terms of processing, FUBI is cleaved from ribosomal protein S30 by the deubiquitinase USP36 before the assembly of ribosomal protein S30 into pre-40S ribosomal particles. FUBI removal from ribosomal protein S30 is a crucial event for the final maturation of pre-40S particles.

It is found in the cytoplasm. Its subcellular location is the nucleus. Its function is as follows. May have pro-apoptotic activity. Component of the 40S subunit of the ribosome. Contributes to the assembly and function of 40S ribosomal subunits. The sequence is that of Ubiquitin-like FUBI-ribosomal protein eS30 fusion protein (FAU) from Oryctolagus cuniculus (Rabbit).